A 320-amino-acid chain; its full sequence is 4-hydroxy-3-methylbut-2-enyl diphosphate reductase (320 aa).

Position 12 (cysteine 12) interacts with [4Fe-4S] cluster. Positions 41 and 74 each coordinate (2E)-4-hydroxy-3-methylbut-2-enyl diphosphate. 2 residues coordinate dimethylallyl diphosphate: histidine 41 and histidine 74. Isopentenyl diphosphate is bound by residues histidine 41 and histidine 74. Cysteine 96 lines the [4Fe-4S] cluster pocket. Histidine 124 is a (2E)-4-hydroxy-3-methylbut-2-enyl diphosphate binding site. Histidine 124 provides a ligand contact to dimethylallyl diphosphate. Isopentenyl diphosphate is bound at residue histidine 124. Residue glutamate 126 is the Proton donor of the active site. Threonine 167 serves as a coordination point for (2E)-4-hydroxy-3-methylbut-2-enyl diphosphate. Cysteine 197 provides a ligand contact to [4Fe-4S] cluster. Residues serine 225, serine 226, asparagine 227, and serine 269 each contribute to the (2E)-4-hydroxy-3-methylbut-2-enyl diphosphate site. Positions 225, 226, 227, and 269 each coordinate dimethylallyl diphosphate. The isopentenyl diphosphate site is built by serine 225, serine 226, asparagine 227, and serine 269.

This sequence belongs to the IspH family. It depends on [4Fe-4S] cluster as a cofactor.

The catalysed reaction is isopentenyl diphosphate + 2 oxidized [2Fe-2S]-[ferredoxin] + H2O = (2E)-4-hydroxy-3-methylbut-2-enyl diphosphate + 2 reduced [2Fe-2S]-[ferredoxin] + 2 H(+). It catalyses the reaction dimethylallyl diphosphate + 2 oxidized [2Fe-2S]-[ferredoxin] + H2O = (2E)-4-hydroxy-3-methylbut-2-enyl diphosphate + 2 reduced [2Fe-2S]-[ferredoxin] + 2 H(+). It functions in the pathway isoprenoid biosynthesis; dimethylallyl diphosphate biosynthesis; dimethylallyl diphosphate from (2E)-4-hydroxy-3-methylbutenyl diphosphate: step 1/1. It participates in isoprenoid biosynthesis; isopentenyl diphosphate biosynthesis via DXP pathway; isopentenyl diphosphate from 1-deoxy-D-xylulose 5-phosphate: step 6/6. Functionally, catalyzes the conversion of 1-hydroxy-2-methyl-2-(E)-butenyl 4-diphosphate (HMBPP) into a mixture of isopentenyl diphosphate (IPP) and dimethylallyl diphosphate (DMAPP). Acts in the terminal step of the DOXP/MEP pathway for isoprenoid precursor biosynthesis. The chain is 4-hydroxy-3-methylbut-2-enyl diphosphate reductase from Francisella tularensis subsp. novicida (strain U112).